We begin with the raw amino-acid sequence, 482 residues long: E3 ubiquitin-protein ligase parkin (482 aa).

The 70-residue stretch at 30-99 (LSIYVKTNTG…LGQQSVLHAI (70 aa)) folds into the Ubiquitin-like domain. Ser94 is modified (phosphoserine; by Pink1). The RING-type 0; atypical zinc-finger motif lies at 157-246 (AHFFVHCSQC…SGGEKDFAAP (90 aa)). Zn(2+) is bound by residues Cys163, Cys166, Cys178, and Cys181. Thr187 carries the post-translational modification Phosphothreonine; by Pink1. 21 residues coordinate Zn(2+): Cys208, Cys232, His235, Cys259, Cys262, Cys274, His278, Cys281, Cys284, Cys310, Cys314, Cys353, Cys358, Cys373, Cys377, Cys382, Cys385, His390, Cys394, Cys436, and Cys439. The segment at 255–482 (KNVPCLACTD…RDCMGAHWFG (228 aa)) is TRIAD supradomain. The segment at 259–314 (CLACTDVSDTVLVFPCASQHVTCIDCFRHYCRSRLGERQFMPHPDFGYTLPCPAGC) adopts an RING-type 1 zinc-finger fold. 2 IBR-type zinc fingers span residues 334–394 (DRYQ…IGEC) and 432–473 (STKP…EWTR). The segment at 436 to 467 (CPKCRTPTERDGGCMHMVCTRAGCGFEWCWVC) adopts an RING-type 2; atypical zinc-finger fold. Cys449 is a catalytic residue. Residues Cys454, Cys459, Cys464, Cys467, Cys475, and His479 each contribute to the Zn(2+) site.

The protein belongs to the RBR family. Parkin subfamily. As to quaternary structure, forms an E3 ubiquitin ligase complex with E2 ubiquitin-conjugating enzymes. Interacts with Pink1. Interacts with Marf. Interacts with Paris. Interacts with septins Septin1 and pnut. Post-translationally, auto-ubiquitinates in an E2-dependent manner leading to its own degradation. In terms of processing, phosphorylated. Activation requires phosphorylation at Ser-94 by Pink1 and binding to Pink1-phosphorylated polyubiquitin chains. Phosphorylation at Thr-187 by Pink1 is also important for mitochondrial localization. In oocytes, accumulates in early egg chambers where it is enriched until stages 9-10, localizing mainly to the posterior pole and anterior margin (at protein level). After stage 10 it is no longer detected in the oocyte (at protein level). In embryos, ubiquitously expressed in the early stages (stages 2 to 5) (at protein level). Expression levels decrease at later stages and becomes restricted to the brain and nerve cord from stage 9 (at protein level). Relatively higher levels of expression in the head compared to the body. Enriched in the dorsomedial (DM) dopaminergic neurons.

It localises to the mitochondrion. It is found in the cytoplasm. The protein localises to the cytosol. It catalyses the reaction [E2 ubiquitin-conjugating enzyme]-S-ubiquitinyl-L-cysteine + [acceptor protein]-L-lysine = [E2 ubiquitin-conjugating enzyme]-L-cysteine + [acceptor protein]-N(6)-ubiquitinyl-L-lysine.. It participates in protein modification; protein ubiquitination. Its activity is regulated as follows. In the autoinhibited state the side chain of Phe-481 inserts into a hydrophobic groove in RING-0, occluding the ubiquitin acceptor site Cys-449, whereas the REP repressor element binds RING-1 and blocks its E2-binding site. Activation of park requires 2 steps: (1) phosphorylation at Ser-94 by Pink1 and (2) binding to phosphorylated ubiquitin, leading to unlock repression of the catalytic Cys-449 by the RING-0 region via an allosteric mechanism and converting park to its fully-active form. According to another report, phosphorylation at Ser-94 by Pink1 is not essential for activation and only binding to phosphorylated ubiquitin is essential to unlock repression. Its function is as follows. E3 ubiquitin-protein ligase which accepts ubiquitin from E2 ubiquitin-conjugating enzymes in the form of a thioester and then directly transfers the ubiquitin to targeted substrates, such as Paris, Marf, Opa1, Miro, pnut, Septin1, Tom20 and porin. Mediates monoubiquitination as well as 'Lys-6', 'Lys-11', 'Lys-48'-linked and 'Lys-63'-linked polyubiquitination of substrates, depending on the context. Protects against mitochondrial dysfunction during cellular stress, by acting downstream of Pink1, to coordinate mitochondrial quality control mechanisms that remove and replace dysfunctional mitochondrial components. Depending on the severity of mitochondrial damage and/or dysfunction, activity ranges from preventing apoptosis and stimulating mitochondrial biogenesis to regulating mitochondrial dynamics and eliminating severely damaged mitochondria via mitophagy. Appears to be particularly important in maintaining the physiology and function of cells with high energy demands that are undergoing stress or altered metabolic environment, including spermatids, muscle cells and neurons such as the dopaminergic (DA) neurons. Activation and recruitment onto the outer membrane of damaged/dysfunctional mitochondria (OMM) requires Pink1-mediated phosphorylation of both park and ubiquitin. In depolarized mitochondria, mediates the decision between mitophagy or preventing apoptosis by inducing either the poly- or monoubiquitination of porin/VDAC; polyubiquitination of porin promotes mitophagy, while monoubiquitination of porin decreases mitochondrial calcium influx which ultimately inhibits apoptosis. When cellular stress results in irreversible mitochondrial damage, promotes the autophagic degradation of dysfunctional depolarized mitochondria (mitophagy) by promoting the ubiquitination of mitochondrial proteins. Preferentially assembles 'Lys-6'-, 'Lys-11'- and 'Lys-63'-linked polyubiquitin chains following mitochondrial damage, leading to mitophagy. In developing tissues, inhibits JNK-mediated apoptosis by negatively regulating bsk transcription. The Pink1-park pathway also promotes fission and/or inhibits fusion of damaged mitochondria by mediating the ubiquitination and subsequent degradation of proteins involved in mitochondrial fusion/fission such as Marf, Opa1 and fzo. This prevents the refusion of unhealthy mitochondria with the healthy mitochondrial network and/or initiates mitochondrial fragmentation facilitating their later engulfment by autophagosomes. Regulates motility of damaged mitochondria by phosphorylating Miro which likely promotes its park-dependent degradation by the proteasome; in motor neurons, this inhibits mitochondrial intracellular anterograde transport along the axons which probably increases the chance of the mitochondria being eliminated in the soma. The Pink1-park pathway is also involved in mitochondrial regeneration processes such as promoting mitochondrial biogenesis, activating localized mitochondrial repair, promoting selective turnover of mitochondrial proteins and initiating the mitochondrial import of endogenous proteins. Involved in mitochondrial biogenesis via the ubiquitination of transcriptional repressor Paris which leads to its subsequent proteasomal degradation and allows activation of the transcription factor srl. Promotes localized mitochondrial repair by activating the translation of specific nuclear-encoded mitochondrial RNAs (nc-mtRNAs) on the mitochondrial surface, including several key electron transport chain component nc-mtRNAs. In Drosophila melanogaster (Fruit fly), this protein is E3 ubiquitin-protein ligase parkin.